The sequence spans 382 residues: Dual-specificity RNA methyltransferase RlmN (382 aa).

Glu-95 serves as the catalytic Proton acceptor. The Radical SAM core domain occupies 101–347 (EDDRGTLCIS…TTVRKTRGDD (247 aa)). A disulfide bond links Cys-108 and Cys-352. Cys-115, Cys-119, and Cys-122 together coordinate [4Fe-4S] cluster. S-adenosyl-L-methionine-binding positions include 178–179 (GE), Ser-210, 232–234 (SLH), and Asn-309. The S-methylcysteine intermediate role is filled by Cys-352.

It belongs to the radical SAM superfamily. RlmN family. [4Fe-4S] cluster is required as a cofactor.

The protein localises to the cytoplasm. The catalysed reaction is adenosine(2503) in 23S rRNA + 2 reduced [2Fe-2S]-[ferredoxin] + 2 S-adenosyl-L-methionine = 2-methyladenosine(2503) in 23S rRNA + 5'-deoxyadenosine + L-methionine + 2 oxidized [2Fe-2S]-[ferredoxin] + S-adenosyl-L-homocysteine. It carries out the reaction adenosine(37) in tRNA + 2 reduced [2Fe-2S]-[ferredoxin] + 2 S-adenosyl-L-methionine = 2-methyladenosine(37) in tRNA + 5'-deoxyadenosine + L-methionine + 2 oxidized [2Fe-2S]-[ferredoxin] + S-adenosyl-L-homocysteine. Its function is as follows. Specifically methylates position 2 of adenine 2503 in 23S rRNA and position 2 of adenine 37 in tRNAs. m2A2503 modification seems to play a crucial role in the proofreading step occurring at the peptidyl transferase center and thus would serve to optimize ribosomal fidelity. In Bordetella avium (strain 197N), this protein is Dual-specificity RNA methyltransferase RlmN.